The chain runs to 313 residues: MATSHFILKLFLVISFCNVCFASRKLTALVQEPENQLLQYHKGALLFGKISVNLIWYGKFKPSQRAIVSDFITSLSSSTPSKTDPSVAKWWKTTEKYYHLANSKKSLSLYLGKQVLVENYSLGKSLTQKQIVQLASKGEQKDAINIVLTASDVAVDGFCVNRCGTHGSSKGAIIRGKTYKFAYIWVGNSETQCAGYCAWPFHQPIYGPQSPPLVAPNNDVGVDGMVINLASLLAGTATNPFGNGYYQGEADAPLEAASACPGVYAKGAYPGYAGDLLVDKTTGASYNAHGTNGRKYLLPALYDPSTSTCSTLV.

Residues 1 to 22 (MATSHFILKLFLVISFCNVCFA) form the signal peptide. Asparagine 119 is a glycosylation site (N-linked (GlcNAc...) asparagine).

This sequence belongs to the EXORDIUM family.

It localises to the secreted. The protein resides in the extracellular space. It is found in the apoplast. May be involved in the regulation of cell division. The chain is Protein PHOSPHATE-INDUCED 1 from Nicotiana tabacum (Common tobacco).